A 393-amino-acid polypeptide reads, in one-letter code: Phosphatidate cytidylyltransferase (393 aa).

8 helical membrane-spanning segments follow: residues 49–69 (NFFR…WISV), 73–93 (IYSF…IIGI), 108–128 (IILG…IMMM), 141–161 (LSFV…ASLR), 171–191 (LFAL…CAIF), 198–218 (FWFV…YVVG), 237–257 (GFIG…HLHV), and 290–310 (IHII…GFLA).

The protein belongs to the CDS family.

The protein localises to the membrane. The enzyme catalyses a 1,2-diacyl-sn-glycero-3-phosphate + CTP + H(+) = a CDP-1,2-diacyl-sn-glycerol + diphosphate. It participates in phospholipid metabolism; CDP-diacylglycerol biosynthesis; CDP-diacylglycerol from sn-glycerol 3-phosphate: step 3/3. The polypeptide is Phosphatidate cytidylyltransferase (CDS1) (Encephalitozoon cuniculi (strain GB-M1) (Microsporidian parasite)).